The primary structure comprises 23 residues: SV40 early leader protein (23 aa).

Residues 1-23 are disordered; it reads MQRPRPPRPLSYSRSSEEAFLEA.

It belongs to the polyomavirus early leader protein family.

In terms of biological role, may play a role in the lytic cycle. The chain is SV40 early leader protein from Macaca (macaques).